Here is an 852-residue protein sequence, read N- to C-terminus: Kinesin-like protein KIF18B (852 aa).

The 345-residue stretch at 7-351 folds into the Kinesin motor domain; the sequence is TLQVVVRVRP…LKYADRAKEI (345 aa). 109-116 contacts ATP; the sequence is GATGAGKT. A coiled-coil region spans residues 366-393; that stretch reads ISQYATICQQLQAEVAALRKKLQVYEGG. Disordered stretches follow at residues 390–424 and 437–485; these read YEGG…PAGP and QVER…RLTL. Ser-404 is subject to Phosphoserine. At Thr-417 the chain carries Phosphothreonine. Positions 451 to 461 are enriched in acidic residues; sequence QSPEDEDEGPA. Phosphoserine occurs at positions 452, 480, and 558. 2 disordered regions span residues 575–594 and 602–689; these read IPVP…PVTR and GPLH…SPRV. Positions 577-588 are enriched in pro residues; the sequence is VPSPLCPEPPGY. The short motif at 624-632 is the Nuclear localization signal element; it reads PMEKKRRRP. Phosphoserine is present on residues Ser-633 and Ser-639. The MAPRE1-binding signature appears at 653–656; sequence SFLP. Ser-662 bears the Phosphoserine mark. Residues 664–673 show a composition bias toward polar residues; that stretch reads PDTQPSQGPS. At Thr-674 the chain carries Phosphothreonine. Positions 711 to 736 are KIF2C-binding; sequence TPLALPTRDLNATFDLSEEPPSKPSF. A disordered region spans residues 767-798; it reads MKGPKPTSSLPGTSACKKKRVASSSVSHGRSR. Short sequence motifs (MAPRE1-binding) lie at residues 774 to 777 and 800 to 803; these read SSLP and ARLP. Ser-822 is subject to Phosphoserine.

This sequence belongs to the TRAFAC class myosin-kinesin ATPase superfamily. Kinesin family. In terms of assembly, interacts with MAPRE1; this interaction is required for efficient accumulation at microtubule plus ends. Interacts with KIF2C at microtubule tips; this interaction increases the affinity of both partners for microtubule plus ends and is required for robust microtubule depolymerization. KIF2C phosphorylation by AURKA or AURKB strongly reduces KIF18B-binding. Shows a prominent expression in the amygdala.

It is found in the nucleus. The protein localises to the cytoplasm. It localises to the cytoskeleton. Functionally, in complex with KIF2C, constitutes the major microtubule plus-end depolymerizing activity in mitotic cells. Its major role may be to transport KIF2C and/or MAPRE1 along microtubules. The chain is Kinesin-like protein KIF18B (KIF18B) from Homo sapiens (Human).